We begin with the raw amino-acid sequence, 382 residues long: Dodecanoyl-[acyl-carrier-protein] hydrolase, chloroplastic (382 aa).

Residues 1 to 83 constitute a chloroplast transit peptide; sequence MATTSLASAF…FSAAEKQWTN (83 aa). Active-site residues include Asn283, His285, and Cys320.

Belongs to the acyl-ACP thioesterase family. In terms of assembly, forms homodimers. In terms of tissue distribution, expressed in developing cotyledons. Not detected in leaves.

Its subcellular location is the plastid. The protein localises to the chloroplast. It carries out the reaction dodecanoyl-[ACP] + H2O = dodecanoate + holo-[ACP] + H(+). In terms of biological role, plays an essential role in chain termination during de novo fatty acid synthesis. High thioesterase activity for lauroyl-ACP versus other acyl-ACPs. The chain is Dodecanoyl-[acyl-carrier-protein] hydrolase, chloroplastic from Umbellularia californica (California bay laurel).